The following is a 370-amino-acid chain: tRNA-specific 2-thiouridylase MnmA (370 aa).

ATP-binding positions include 24-31 (AMSGGVDS) and leucine 50. The active-site Nucleophile is cysteine 118. The cysteines at positions 118 and 214 are disulfide-linked. Glycine 142 contributes to the ATP binding site. An interaction with tRNA region spans residues 164 to 166 (KDQ). The active-site Cysteine persulfide intermediate is the cysteine 214.

The protein belongs to the MnmA/TRMU family.

It localises to the cytoplasm. The catalysed reaction is S-sulfanyl-L-cysteinyl-[protein] + uridine(34) in tRNA + AH2 + ATP = 2-thiouridine(34) in tRNA + L-cysteinyl-[protein] + A + AMP + diphosphate + H(+). Catalyzes the 2-thiolation of uridine at the wobble position (U34) of tRNA, leading to the formation of s(2)U34. The protein is tRNA-specific 2-thiouridylase MnmA of Ehrlichia ruminantium (strain Gardel).